Reading from the N-terminus, the 25-residue chain is Unknown protein 7 (25 aa).

The tract at residues 1–25 (MENGKVHVASMSGLSMPHMNEMLEK) is disordered.

This is Unknown protein 7 from Pseudotsuga menziesii (Douglas-fir).